The sequence spans 341 residues: DNA fragmentation factor subunit beta (341 aa).

One can recognise a CIDE-N domain in the interval 7-83 (KPKTFKLRSL…LLTAGQTWQG (77 aa)).

Heterodimer of DFFA and DFFB. Interacts with H1-1.

It is found in the cytoplasm. The protein localises to the nucleus. With respect to regulation, inhibited by DFFA (DFF45). Interacts with HIST1H1A. Functionally, nuclease that induces DNA fragmentation and chromatin condensation during apoptosis. Degrades naked DNA and induces apoptotic morphology. The polypeptide is DNA fragmentation factor subunit beta (DFFB) (Bos taurus (Bovine)).